The sequence spans 627 residues: Sister chromatid cohesion 1 protein 1 (627 aa).

3 disordered regions span residues glycine 211 to serine 294, methionine 395 to serine 416, and glycine 461 to glutamate 510. Basic and acidic residues-rich tracts occupy residues glutamate 254–phenylalanine 263, isoleucine 272–glutamine 282, and methionine 395–aspartate 408. Residues methionine 467–lysine 487 show a composition bias toward polar residues.

Belongs to the rad21 family. In terms of assembly, component of the cohesin complex. In terms of tissue distribution, isoform 2 is expressed at low levels in buds, leaves and roots, whereas expression of isoform 1 is confined to buds.

The protein resides in the nucleus. Functionally, involved in chromosome condensation, pairing and segregation during meiosis. Responsible for cohesion between replicated sister chromatids. This Arabidopsis thaliana (Mouse-ear cress) protein is Sister chromatid cohesion 1 protein 1 (SYN1).